Here is a 1230-residue protein sequence, read N- to C-terminus: Protein transport protein Sec31A (1230 aa).

WD repeat units follow at residues 4–47, 64–111, 120–160, 166–206, 209–254, 258–298, and 301–342; these read KEID…EIFE, SSSH…AGDK, KHTG…TPMT, QPPE…PIIK, DHSN…SPLR, NHAR…VLYE, and TNTQ…DGLR. An interaction with SEC13 region spans residues 161–470; sequence PGAKTQPPED…IEASQTEFEK (310 aa). Residues 397–429 form a WD 8; interaction with SEC13 repeat; sequence SFSFGGKLVTFESVAVPLQQGAEQQRRQPVFIS. The residue at position 423 (arginine 423) is an Asymmetric dimethylarginine. Residues serine 526 and serine 531 each carry the phosphoserine modification. Lysine 646 participates in a covalent cross-link: Glycyl lysine isopeptide (Lys-Gly) (interchain with G-Cter in ubiquitin). 2 disordered regions span residues 789 to 905 and 924 to 1104; these read QGKP…ASNA and MYTA…PIGN. Serine 798 is modified (phosphoserine). An interaction with PDCD6 region spans residues 799-1123; the sequence is SQSPYERQPL…TEKITKKPIP (325 aa). The ALG-2-binding site motif-2 (ABS-2) motif lies at 841–847; it reads GFIMQGN. Over residues 866-876 the composition is skewed to pro residues; that stretch reads QLPPYPQPQPY. Composition is skewed to low complexity over residues 930–940 and 959–975; these read ASSPTSSSAAS and PSSSAYALPPGTTGTPP. Composition is skewed to polar residues over residues 981 to 995 and 1033 to 1064; these read PASQRTENQSFQDQA and PIMNPSGDPQSQGLQQQPSTPGPLSSHASFPQ. Phosphothreonine is present on threonine 1171. A Phosphoserine modification is found at serine 1173. Lysine 1227 participates in a covalent cross-link: Glycyl lysine isopeptide (Lys-Gly) (interchain with G-Cter in ubiquitin).

Belongs to the WD repeat SEC31 family. As to quaternary structure, COPII is composed of at least 5 proteins: the SEC23/24 complex, the SEC13/31 complex and SAR1. SEC13 and SEC31 make a 2:2 tetramer that forms the edge element of the COPII outer coat. The tetramer self-assembles in multiple copies to form the complete polyhedral cage. Interacts (via WD 8) with SEC13. Interacts with PDCD6; interaction takes place in response to cytosolic calcium increase and leads to bridge together the BCR(KLHL12) complex and SEC31A, leading to monoubiquitination. Interacts with KLHL12. Monoubiquitinated by the BCR(KLHL12) E3 ubiquitin ligase complex, leading to regulate the size of COPII coats.

The protein resides in the cytoplasm. It localises to the cytoplasmic vesicle. The protein localises to the COPII-coated vesicle membrane. It is found in the endoplasmic reticulum membrane. Functionally, component of the coat protein complex II (COPII) which promotes the formation of transport vesicles from the endoplasmic reticulum (ER). The coat has two main functions, the physical deformation of the endoplasmic reticulum membrane into vesicles and the selection of cargo molecules. The protein is Protein transport protein Sec31A (Sec31a) of Mus musculus (Mouse).